A 178-amino-acid chain; its full sequence is Interleukin-10 (178 aa).

The first 18 residues, 1–18 (MHSSALLCCLVFLTGVRA), serve as a signal peptide directing secretion. 2 disulfides stabilise this stretch: Cys-30/Cys-126 and Cys-80/Cys-132. Asn-134 carries an N-linked (GlcNAc...) asparagine glycan.

This sequence belongs to the IL-10 family. Homodimer. Interacts with IL10RA and IL10RB.

The protein localises to the secreted. Functionally, major immune regulatory cytokine that acts on many cells of the immune system where it has profound anti-inflammatory functions, limiting excessive tissue disruption caused by inflammation. Mechanistically, IL10 binds to its heterotetrameric receptor comprising IL10RA and IL10RB leading to JAK1 and STAT2-mediated phosphorylation of STAT3. In turn, STAT3 translocates to the nucleus where it drives expression of anti-inflammatory mediators. Targets antigen-presenting cells (APCs) such as macrophages and monocytes and inhibits their release of pro-inflammatory cytokines including granulocyte-macrophage colony-stimulating factor /GM-CSF, granulocyte colony-stimulating factor/G-CSF, IL-1 alpha, IL-1 beta, IL-6, IL-8 and TNF-alpha. Also interferes with antigen presentation by reducing the expression of MHC-class II and co-stimulatory molecules, thereby inhibiting their ability to induce T cell activation. In addition, controls the inflammatory response of macrophages by reprogramming essential metabolic pathways including mTOR signaling. This Callithrix jacchus (White-tufted-ear marmoset) protein is Interleukin-10 (IL10).